The chain runs to 124 residues: Small ribosomal subunit protein uS12 (124 aa).

Position 89 is a 3-methylthioaspartic acid (Asp89). A disordered region spans residues 104–124 (TAGVKDRRQSRSKYGAKTPKE).

This sequence belongs to the universal ribosomal protein uS12 family. Part of the 30S ribosomal subunit. Contacts proteins S8 and S17. May interact with IF1 in the 30S initiation complex.

Its function is as follows. With S4 and S5 plays an important role in translational accuracy. Functionally, interacts with and stabilizes bases of the 16S rRNA that are involved in tRNA selection in the A site and with the mRNA backbone. Located at the interface of the 30S and 50S subunits, it traverses the body of the 30S subunit contacting proteins on the other side and probably holding the rRNA structure together. The combined cluster of proteins S8, S12 and S17 appears to hold together the shoulder and platform of the 30S subunit. This Parasynechococcus marenigrum (strain WH8102) protein is Small ribosomal subunit protein uS12.